Reading from the N-terminus, the 308-residue chain is Porphobilinogen deaminase (308 aa).

At C242 the chain carries S-(dipyrrolylmethanemethyl)cysteine.

It belongs to the HMBS family. In terms of assembly, monomer. Dipyrromethane serves as cofactor.

It catalyses the reaction 4 porphobilinogen + H2O = hydroxymethylbilane + 4 NH4(+). It functions in the pathway porphyrin-containing compound metabolism; protoporphyrin-IX biosynthesis; coproporphyrinogen-III from 5-aminolevulinate: step 2/4. Functionally, tetrapolymerization of the monopyrrole PBG into the hydroxymethylbilane pre-uroporphyrinogen in several discrete steps. The protein is Porphobilinogen deaminase of Alkalilimnicola ehrlichii (strain ATCC BAA-1101 / DSM 17681 / MLHE-1).